The primary structure comprises 312 residues: tRNA-cytidine(32) 2-sulfurtransferase (312 aa).

The short motif at 39-44 (SGGKDS) is the PP-loop motif element. Residues C114, C117, and C205 each contribute to the [4Fe-4S] cluster site.

Belongs to the TtcA family. As to quaternary structure, homodimer. It depends on Mg(2+) as a cofactor. Requires [4Fe-4S] cluster as cofactor.

The protein resides in the cytoplasm. The catalysed reaction is cytidine(32) in tRNA + S-sulfanyl-L-cysteinyl-[cysteine desulfurase] + AH2 + ATP = 2-thiocytidine(32) in tRNA + L-cysteinyl-[cysteine desulfurase] + A + AMP + diphosphate + H(+). It functions in the pathway tRNA modification. In terms of biological role, catalyzes the ATP-dependent 2-thiolation of cytidine in position 32 of tRNA, to form 2-thiocytidine (s(2)C32). The sulfur atoms are provided by the cysteine/cysteine desulfurase (IscS) system. The protein is tRNA-cytidine(32) 2-sulfurtransferase of Ralstonia nicotianae (strain ATCC BAA-1114 / GMI1000) (Ralstonia solanacearum).